The primary structure comprises 91 residues: Insertion element IS1 1 protein InsA (91 aa).

Belongs to the IS1 elements InsA family.

Absolutely required for transposition of IS1. The sequence is that of Insertion element IS1 1 protein InsA (insA1) from Escherichia coli (strain K12).